Reading from the N-terminus, the 159-residue chain is NADH-quinone oxidoreductase subunit I (159 aa).

2 consecutive 4Fe-4S ferredoxin-type domains span residues Arg51 to Asp80 and Thr90 to Asn119. [4Fe-4S] cluster-binding residues include Cys60, Cys63, Cys66, Cys70, Cys99, Cys102, Cys105, and Cys109.

The protein belongs to the complex I 23 kDa subunit family. As to quaternary structure, NDH-1 is composed of 14 different subunits. Subunits NuoA, H, J, K, L, M, N constitute the membrane sector of the complex. [4Fe-4S] cluster serves as cofactor.

It is found in the cell inner membrane. The catalysed reaction is a quinone + NADH + 5 H(+)(in) = a quinol + NAD(+) + 4 H(+)(out). Its function is as follows. NDH-1 shuttles electrons from NADH, via FMN and iron-sulfur (Fe-S) centers, to quinones in the respiratory chain. The immediate electron acceptor for the enzyme in this species is believed to be ubiquinone. Couples the redox reaction to proton translocation (for every two electrons transferred, four hydrogen ions are translocated across the cytoplasmic membrane), and thus conserves the redox energy in a proton gradient. This chain is NADH-quinone oxidoreductase subunit I, found in Rickettsia massiliae (strain Mtu5).